The chain runs to 690 residues: Ras guanyl-releasing protein 3 (690 aa).

The region spanning 3–125 (SSGLGKAATL…SLIDISSIPS (123 aa)) is the N-terminal Ras-GEF domain. In terms of domain architecture, Ras-GEF spans 152 to 383 (EPIELAEHLT…YKLSLVLEPR (232 aa)). 2 EF-hand domains span residues 420–455 (HIRKLVESVFRNYDHDHDGYISQEDFESIAANFPFL) and 458–484 (FCVLDKDQDGLISKDEMMAYFLRAKSQ). Ca(2+) contacts are provided by aspartate 433, aspartate 435, aspartate 437, tyrosine 439, aspartate 444, aspartate 462, aspartate 464, aspartate 466, and glutamate 473. The Phorbol-ester/DAG-type zinc finger occupies 494–544 (IHNFQEMTYLKPTFCEHCAGFLWGIIKQGYKCKDCGANCHKQCKDLLVLAC). Positions 667 to 690 (VDRGTEFELDQDEGEETRQDGEDG) are disordered.

This sequence belongs to the RASGRP family.

Its function is as follows. Guanine nucleotide exchange factor (GEF) for Ras and Rap1. This chain is Ras guanyl-releasing protein 3 (RASGRP3), found in Homo sapiens (Human).